The primary structure comprises 133 residues: MAKASTSGASRVRKKVKKNVSDGIAHVHASFNNTIITITDRQGNALSWATSGGAGFKGSRKSTPFAAQVAAETAGRVAMEYGIKTLEVRIKGPGPGRESSVRALNALGIKISSIADITPVPHNGCRPPKRRRI.

Belongs to the universal ribosomal protein uS11 family. In terms of assembly, part of the 30S ribosomal subunit. Interacts with proteins S7 and S18. Binds to IF-3.

Functionally, located on the platform of the 30S subunit, it bridges several disparate RNA helices of the 16S rRNA. Forms part of the Shine-Dalgarno cleft in the 70S ribosome. The chain is Small ribosomal subunit protein uS11 from Bordetella avium (strain 197N).